A 78-amino-acid polypeptide reads, in one-letter code: Consomatin Nc1 (78 aa).

Residues 1-22 form the signal peptide; sequence MQTAYWVMVMVMVWITAPLSEG. A propeptide spanning residues 23–59 is cleaved from the precursor; sequence GKPNDVIRGLVPDDLTPQLILRSLISRRRSDKDVGKR. Residue E61 is modified to 4-carboxyglutamate. The cysteines at positions 62 and 67 are disulfide-linked. D-tryptophan is present on W64. P70 carries the post-translational modification 4-hydroxyproline. A propeptide spanning residues 71-78 is cleaved from the precursor; it reads LSRRHDLG.

This sequence belongs to the conotoxin C superfamily. Consomatin family. As to expression, expressed by the venom duct.

Its subcellular location is the secreted. Moderately activates human somatostatin receptors (SSTR) with a preferential activation of SSTR1 and SSTR4. In vivo, does not cause behavioral changes in mice within a few minutes of intracranial injection, but causes a progressive loss of movement thereafter. Four to five hours after injection, mice recover, even with the highest dose tested. Shows antinociception and antihyperalgesia activities in two mouse models of acute pain, most probably by acting outside the central nervous system. In Conus neocostatus (Cone snail), this protein is Consomatin Nc1.